Reading from the N-terminus, the 410-residue chain is Peptidase T (410 aa).

His-79 provides a ligand contact to Zn(2+). The active site involves Asp-81. Asp-142 contributes to the Zn(2+) binding site. The active-site Proton acceptor is the Glu-176. 3 residues coordinate Zn(2+): Glu-177, Asp-199, and His-381.

It belongs to the peptidase M20B family. Requires Zn(2+) as cofactor.

It localises to the cytoplasm. It catalyses the reaction Release of the N-terminal residue from a tripeptide.. Functionally, cleaves the N-terminal amino acid of tripeptides. In Bacillus cereus (strain B4264), this protein is Peptidase T.